The sequence spans 141 residues: Hemoglobin subunit alpha (141 aa).

One can recognise a Globin domain in the interval 1–141 (VLSPADKTNV…VSTVLTSKYR (141 aa)). Position 3 is a phosphoserine (Ser3). Position 7 is an N6-succinyllysine (Lys7). Residue Thr8 is modified to Phosphothreonine. An N6-succinyllysine modification is found at Lys11. N6-acetyllysine; alternate is present on Lys16. Lys16 carries the post-translational modification N6-succinyllysine; alternate. A Phosphotyrosine modification is found at Tyr24. Residue Ser35 is modified to Phosphoserine. Position 40 is an N6-succinyllysine (Lys40). The residue at position 49 (Ser49) is a Phosphoserine. His58 is a binding site for O2. His87 provides a ligand contact to heme b. Ser102 carries the phosphoserine modification. Residue Thr108 is modified to Phosphothreonine. A Phosphoserine modification is found at Ser124. Phosphothreonine is present on residues Thr134 and Thr137. Phosphoserine is present on Ser138.

The protein belongs to the globin family. In terms of assembly, heterotetramer of two alpha chains and two beta chains. As to expression, red blood cells.

Functionally, involved in oxygen transport from the lung to the various peripheral tissues. The protein is Hemoglobin subunit alpha of Tamias merriami (Merriam's chipmunk).